Here is a 435-residue protein sequence, read N- to C-terminus: MDLKIFDRMESEVRGYIRSFPVIFSQARGSLLIDEEGNEYIDFFSGAGTLNYGHNNPVFKERLLEYLHSDGVVHGLDMATSAKKRFLETVDRVLLKPRNWQYTLQFTGPTGTNAVEAALKLARQVKGRSNIISFTHGFHGVSGGSLAATANAKFRDAAGVSLGNTTFMPYDGYFGPDVDTIAYIERMLDDPSSGLDKPAAVIVETVQGEGGVNVATLRWLKDLQKLCRRHDMLMIVDDIQVGCGRTGSFFSFEAAGIQPDIITLSKSLSGFGLPMSLVLMKPELDVWKPGAHSGTFRGNNLAFVTATQALETYWSSDAFSNEVQRKERLVRDWLENLAHSYPNAGLAVRGRGLIQGLVATAEPELANRIARKAFERGVVIETSGAQDEVLKLLPALTIEDELLTRGLDLIEASVADALSEEQPAAQVLKFGGKRR.

The residue at position 266 (Lys-266) is an N6-(pyridoxal phosphate)lysine.

It belongs to the class-III pyridoxal-phosphate-dependent aminotransferase family. Requires pyridoxal 5'-phosphate as cofactor.

The enzyme catalyses L-2,4-diaminobutanoate + 2-oxoglutarate = L-aspartate 4-semialdehyde + L-glutamate. It participates in amine and polyamine biosynthesis; ectoine biosynthesis; L-ectoine from L-aspartate 4-semialdehyde: step 1/3. In terms of biological role, catalyzes reversively the conversion of L-aspartate beta-semialdehyde (ASA) to L-2,4-diaminobutyrate (DABA) by transamination with L-glutamate. This Bordetella bronchiseptica (strain ATCC BAA-588 / NCTC 13252 / RB50) (Alcaligenes bronchisepticus) protein is Diaminobutyrate--2-oxoglutarate transaminase (ectB).